The primary structure comprises 314 residues: Putative peptide transport system permease protein BruAb2_1031 (314 aa).

The next 6 helical transmembrane spans lie at 12–32 (AIPV…LLPG), 101–121 (LALL…VVAA), 135–155 (LALL…VILF), 177–197 (WLRS…GYLA), 237–257 (VSVL…SVVI), and 286–306 (MLFL…LYTI). Residues 95-304 (LPVTISLALL…AINVLVDILY (210 aa)) form the ABC transmembrane type-1 domain.

Belongs to the binding-protein-dependent transport system permease family. As to quaternary structure, the complex is composed of two ATP-binding proteins (BruAb2_1033 and BruAb2_1034), two transmembrane proteins (BruAb2_1031 and BruAb2_1032) and a solute-binding protein (BruAb2_1030).

It localises to the cell inner membrane. Functionally, probably part of an ABC transporter complex that could be involved in peptide import. Probably responsible for the translocation of the substrate across the membrane. This Brucella abortus biovar 1 (strain 9-941) protein is Putative peptide transport system permease protein BruAb2_1031.